The sequence spans 161 residues: Nucleotide-binding protein Gbem_0619 (161 aa).

This sequence belongs to the YajQ family.

Nucleotide-binding protein. The sequence is that of Nucleotide-binding protein Gbem_0619 from Citrifermentans bemidjiense (strain ATCC BAA-1014 / DSM 16622 / JCM 12645 / Bem) (Geobacter bemidjiensis).